We begin with the raw amino-acid sequence, 872 residues long: Metabotropic glutamate receptor 2 (872 aa).

The N-terminal stretch at Met1–Ala18 is a signal peptide. Over Glu19–Trp567 the chain is Extracellular. A disulfide bridge connects residues Cys50 and Cys92. Residues Arg57, Arg61, Ser145, Ala166, and Thr168 each contribute to the L-glutamate site. Asn203 and Asn286 each carry an N-linked (GlcNAc...) asparagine glycan. 7 cysteine pairs are disulfide-bonded: Cys234-Cys518, Cys355-Cys362, Cys400-Cys407, Cys500-Cys519, Cys504-Cys522, Cys525-Cys537, and Cys540-Cys553. Asp295 is a binding site for L-glutamate. An N-linked (GlcNAc...) asparagine glycan is attached at Asn338. Position 377 (Lys377) interacts with L-glutamate. A glycan (N-linked (GlcNAc...) asparagine) is linked at Asn402. The N-linked (GlcNAc...) asparagine glycan is linked to Asn547. A helical transmembrane segment spans residues Ala568–Val590. The Cytoplasmic portion of the chain corresponds to Arg591–Glu604. Residues Leu605–Ala625 traverse the membrane as a helical segment. The Extracellular portion of the chain corresponds to Lys626–Arg636. A disulfide bond links Cys632 and Cys721. The helical transmembrane segment at Leu637 to Asn655 threads the bilayer. Residues Arg656–Gln679 are Cytoplasmic-facing. An important for interaction with HTR2A region spans residues Ala677 to Ala685. A helical membrane pass occupies residues Val680–Val700. Over Glu701 to Asp725 the chain is Extracellular. A helical transmembrane segment spans residues Ala726 to Phe747. At Lys748 to Lys760 the chain is on the cytoplasmic side. Residues Phe761–Thr783 form a helical membrane-spanning segment. Over Ser784–Thr793 the chain is Extracellular. A helical transmembrane segment spans residues Met794 to Phe819. Over Gln820–Leu872 the chain is Cytoplasmic.

This sequence belongs to the G-protein coupled receptor 3 family. In terms of assembly, forms heterodimers with GRM3 or GRM4. Interacts with GNAI1. Interacts with TAMALIN. Interacts with HTR2A. As to expression, is widely distributed in the CNS and prominent expression is seen in Golgi cells of the cerebellum and some particular neuronal cells in other brain regions.

The protein resides in the cell membrane. The protein localises to the synapse. Its subcellular location is the cell projection. It localises to the dendrite. Functionally, dimeric G protein-coupled receptor which is activated by the excitatory neurotransmitter L-glutamate. Plays critical roles in modulating synaptic transmission and neuronal excitability. Upon activation by glutamate, inhibits presynaptic calcium channels, reducing further glutamate release and dampening excitatory signaling. Mechanistically, ligand binding causes a conformation change that triggers signaling via guanine nucleotide-binding proteins (G proteins) and modulates the activity of down-stream effectors, such as adenylate cyclase. May mediate suppression of neurotransmission or may be involved in synaptogenesis or synaptic stabilization. The polypeptide is Metabotropic glutamate receptor 2 (Grm2) (Rattus norvegicus (Rat)).